The following is a 194-amino-acid chain: PLASMODESMATA CALLOSE-BINDING PROTEIN 2 (194 aa).

The N-terminal stretch at 1–16 is a signal peptide; the sequence is MAPLVLYLLTLLMAGH. An intrachain disulfide couples Cys22 to Cys84. A glycan (N-linked (GlcNAc...) asparagine) is linked at Asn85. The segment covering 106–116 has biased composition (low complexity); the sequence is SSASGSSGSGS. Positions 106–140 are disordered; sequence SSASGSSGSGSTTVTPGKNSPKGSNSITTFPGGNS. Polar residues predominate over residues 117–140; sequence TTVTPGKNSPKGSNSITTFPGGNS. The N-linked (GlcNAc...) asparagine glycan is linked to Asn154. Ser171 carries the GPI-anchor amidated serine lipid modification. Positions 172-194 are cleaved as a propeptide — removed in mature form; it reads SGFALYYSNNLLLTGFCSLVMML.

Post-translationally, contains two additional disulfide bonds. As to expression, expressed in the shoot apical region and in young leaves but also detected in the laminar and vasculature of mature leaves.

Its subcellular location is the cell membrane. The protein resides in the cell junction. It is found in the plasmodesma. In terms of biological role, able to bind (1-&gt;3)-beta-D-glucans (laminarin). The protein is PLASMODESMATA CALLOSE-BINDING PROTEIN 2 (PDCB2) of Arabidopsis thaliana (Mouse-ear cress).